Here is a 299-residue protein sequence, read N- to C-terminus: Sodium/potassium-transporting ATPase subunit beta-2 (299 aa).

The Cytoplasmic portion of the chain corresponds to 1 to 36 (MAALTQKKTCSQMMEEWKEFMWNPRTREFMGRTGSS). A helical; Signal-anchor for type II membrane protein transmembrane segment spans residues 37-57 (WALILLFYVVFYAFLTAVFSL). Residues 58–299 (SLWVMLQTID…VIFTMKIDRL (242 aa)) are Extracellular-facing. 2 N-linked (GlcNAc...) asparagine glycosylation sites follow: Asn-101 and Asn-119. Intrachain disulfides connect Cys-130–Cys-152 and Cys-162–Cys-178. 4 N-linked (GlcNAc...) asparagine glycosylation sites follow: Asn-199, Asn-226, Asn-247, and Asn-259. An intrachain disulfide couples Cys-206 to Cys-270.

Belongs to the X(+)/potassium ATPases subunit beta family. In terms of assembly, the sodium/potassium-transporting ATPase is composed of a catalytic alpha subunit, an auxiliary non-catalytic beta subunit and an additional regulatory subunit. Expressed at a high level in bladder epithelial cells and eye and at a trace level in kidney; it is not detectable in significant amounts in the stomach, colon and small intestine.

The protein resides in the cell membrane. This is the non-catalytic component of the active enzyme, which catalyzes the hydrolysis of ATP coupled with the exchange of Na(+) and K(+) ions across the plasma membrane. The exact function of this glycoprotein is not known. Some specific sequence of the beta subunit can modulate the activation of the Na,K-pump by extracellular potassium ions. This Rhinella marina (Cane toad) protein is Sodium/potassium-transporting ATPase subunit beta-2.